The primary structure comprises 112 residues: uncharacterized protein (112 aa).

Residues 1-27 form a disordered region; it reads MIASIGDSAEPPLRRTRRAQQQDRPPT.

This is an uncharacterized protein from Orgyia pseudotsugata multicapsid polyhedrosis virus (OpMNPV).